The sequence spans 420 residues: Mannose-1-phosphate guanylyltransferase regulatory subunit alpha (420 aa).

Residues 2 to 251 are substrate-binding domain; the sequence is LKAVILIGGP…DGIWSQIKSA (250 aa). GDP-alpha-D-mannose-binding residues include Glu85 and Gln247. The interval 273–420 is hexapeptide repeat domain; sequence LAKHTPGGPR…SRSFTNQIIL (148 aa). The segment at 356 to 384 is C-loop; the sequence is TPNDPNPNDPRARMDSESLFKDGKLLPAI.

This sequence belongs to the transferase hexapeptide repeat family. Component of the GMPPA-GMPPB mannose-1-phosphate guanylyltransferase complex composed of 4 GMPPA subunits and 8 GMPPB subunits; the complex is organized into three layers, a central layer made up of 2 GMPPA dimers sandwiched between two layers each made up of 2 GMPPB dimers.

The protein resides in the cytoplasm. Its function is as follows. Regulatory subunit of the GMPPA-GMPPB mannose-1-phosphate guanylyltransferase complex; reduces the catalytic activity of GMPPB when part of the complex. Mediates allosteric feedback inhibition of GMPPB catalytic activity upon binding GDP-alpha-D-mannose. Together with GMPPB regulates GDP-alpha-D-mannose levels. The polypeptide is Mannose-1-phosphate guanylyltransferase regulatory subunit alpha (GMPPA) (Papio anubis (Olive baboon)).